We begin with the raw amino-acid sequence, 507 residues long: FLYWCH transcription factor 1 (507 aa).

The span at 1–26 (MYSPESMNSNISSPSPPSSSSLNAPS) shows a compositional bias: low complexity. The disordered stretch occupies residues 1–51 (MYSPESMNSNISSPSPPSSSSLNAPSLADAPEVRSDDGEAETSEPSTSVTA). The FLYWCH-type zinc-finger motif lies at 135–192 (KKTRLKVFSNGFFMTFDKLSSCQKKYFWRCEYKNTCKARMHTDIVTEKILTFIHEHNH).

Probable transcription factor. Binds to the DNA sequence motif 5'-[AG]GGCGCCG-3' in the promoters of target genes, including micro-RNA genes, in order to repress expression, and acting redundantly with flh-2. The sequence is that of FLYWCH transcription factor 1 from Caenorhabditis elegans.